Here is a 396-residue protein sequence, read N- to C-terminus: NADH-quinone oxidoreductase subunit D 1 (396 aa).

It belongs to the complex I 49 kDa subunit family. In terms of assembly, NDH-1 is composed of 14 different subunits. Subunits NuoB, C, D, E, F, and G constitute the peripheral sector of the complex.

It localises to the cell inner membrane. It carries out the reaction a quinone + NADH + 5 H(+)(in) = a quinol + NAD(+) + 4 H(+)(out). In terms of biological role, NDH-1 shuttles electrons from NADH, via FMN and iron-sulfur (Fe-S) centers, to quinones in the respiratory chain. The immediate electron acceptor for the enzyme in this species is believed to be ubiquinone. Couples the redox reaction to proton translocation (for every two electrons transferred, four hydrogen ions are translocated across the cytoplasmic membrane), and thus conserves the redox energy in a proton gradient. This Rhizobium etli (strain ATCC 51251 / DSM 11541 / JCM 21823 / NBRC 15573 / CFN 42) protein is NADH-quinone oxidoreductase subunit D 1.